The following is a 190-amino-acid chain: Elongation factor P-like protein (190 aa).

The protein belongs to the elongation factor P family.

The protein is Elongation factor P-like protein of Salmonella gallinarum (strain 287/91 / NCTC 13346).